A 258-amino-acid polypeptide reads, in one-letter code: Type III pantothenate kinase 1 (258 aa).

6-13 (DMGNSHIH) lines the ATP pocket. 107-110 (GADR) lines the substrate pocket. The Proton acceptor role is filled by Asp-109. A K(+)-binding site is contributed by Asp-130. Position 133 (Thr-133) interacts with ATP. Thr-185 provides a ligand contact to substrate.

This sequence belongs to the type III pantothenate kinase family. In terms of assembly, homodimer. NH4(+) is required as a cofactor. K(+) serves as cofactor.

Its subcellular location is the cytoplasm. The enzyme catalyses (R)-pantothenate + ATP = (R)-4'-phosphopantothenate + ADP + H(+). It functions in the pathway cofactor biosynthesis; coenzyme A biosynthesis; CoA from (R)-pantothenate: step 1/5. Its function is as follows. Catalyzes the phosphorylation of pantothenate (Pan), the first step in CoA biosynthesis. This Francisella tularensis subsp. tularensis (strain FSC 198) protein is Type III pantothenate kinase 1.